Reading from the N-terminus, the 172-residue chain is uncharacterized protein (172 aa).

2 disordered regions span residues 1–54 and 82–111; these read MPRR…GGSS and ITGGFSGSGSNNAPADTSVPQSSYSNSVPE. Residues 14 to 29 are compositionally biased toward low complexity; it reads AAPARSASTAAALPPR. A compositionally biased stretch (pro residues) spans 30–47; that stretch reads TMAPPPAPSRVQQAPPPT. Residues 89 to 109 are compositionally biased toward polar residues; sequence SGSNNAPADTSVPQSSYSNSV.

This is an uncharacterized protein from Schizosaccharomyces pombe (strain 972 / ATCC 24843) (Fission yeast).